We begin with the raw amino-acid sequence, 525 residues long: Cytochrome P450 714A2 (525 aa).

The Lumenal portion of the chain corresponds to 1-3 (MES). The chain crosses the membrane as a helical; Signal-anchor for type III membrane protein span at residues 4–24 (LVVHTVNAIWCIVIVGIFSVG). Residues 25–525 (YHVYGRAVVE…PQHGVVIRVV (501 aa)) are Cytoplasmic-facing. Cys475 is a binding site for heme.

Belongs to the cytochrome P450 family. Heme is required as a cofactor. As to expression, expressed in the shoot apical meristem (SAM) and petioles of young leaves, in the leaf margin and petiole vein of cotyledons, and at low levels in the filaments of developing flowers. Not detected in siliques.

It is found in the endoplasmic reticulum membrane. Its function is as follows. Involved in the inactivation of early gibberellin (GA) intermediates. The polypeptide is Cytochrome P450 714A2 (CYP714A2) (Arabidopsis thaliana (Mouse-ear cress)).